The sequence spans 429 residues: Asparagine--tRNA ligase (429 aa).

Belongs to the class-II aminoacyl-tRNA synthetase family. In terms of assembly, homodimer.

The protein localises to the cytoplasm. The catalysed reaction is tRNA(Asn) + L-asparagine + ATP = L-asparaginyl-tRNA(Asn) + AMP + diphosphate + H(+). The chain is Asparagine--tRNA ligase from Desulforamulus reducens (strain ATCC BAA-1160 / DSM 100696 / MI-1) (Desulfotomaculum reducens).